We begin with the raw amino-acid sequence, 187 residues long: Elongation factor P (187 aa).

It belongs to the elongation factor P family.

It localises to the cytoplasm. It functions in the pathway protein biosynthesis; polypeptide chain elongation. Involved in peptide bond synthesis. Stimulates efficient translation and peptide-bond synthesis on native or reconstituted 70S ribosomes in vitro. Probably functions indirectly by altering the affinity of the ribosome for aminoacyl-tRNA, thus increasing their reactivity as acceptors for peptidyl transferase. The chain is Elongation factor P from Ruegeria sp. (strain TM1040) (Silicibacter sp.).